Reading from the N-terminus, the 226-residue chain is ATP-dependent Clp protease proteolytic subunit 2 (226 aa).

The active-site Nucleophile is serine 118. Histidine 143 is an active-site residue.

It belongs to the peptidase S14 family. Fourteen ClpP subunits assemble into 2 heptameric rings which stack back to back to give a disk-like structure with a central cavity, resembling the structure of eukaryotic proteasomes.

The protein localises to the cytoplasm. It catalyses the reaction Hydrolysis of proteins to small peptides in the presence of ATP and magnesium. alpha-casein is the usual test substrate. In the absence of ATP, only oligopeptides shorter than five residues are hydrolyzed (such as succinyl-Leu-Tyr-|-NHMec, and Leu-Tyr-Leu-|-Tyr-Trp, in which cleavage of the -Tyr-|-Leu- and -Tyr-|-Trp bonds also occurs).. Functionally, cleaves peptides in various proteins in a process that requires ATP hydrolysis. Has a chymotrypsin-like activity. Plays a major role in the degradation of misfolded proteins. This Synechocystis sp. (strain ATCC 27184 / PCC 6803 / Kazusa) protein is ATP-dependent Clp protease proteolytic subunit 2.